A 477-amino-acid polypeptide reads, in one-letter code: Enolase 1, chloroplastic (477 aa).

A chloroplast-targeting transit peptide spans Met1 to Gln41. Substrate-binding residues include His203 and Glu212. The active-site Proton donor is Glu255. Mg(2+)-binding residues include Asp290, Glu340, and Asp365. Substrate-binding residues include Glu340 and Asp365. Lys390 serves as the catalytic Proton acceptor. Substrate is bound by residues Ser417–Ser420 and Lys441. A Phosphoserine modification is found at Ser476.

Belongs to the enolase family. It depends on Mg(2+) as a cofactor. In terms of tissue distribution, highly expressed in young roots, young siliques, and shoot apex. Lowly expressed in young leaves, stems and cotyledons.

It is found in the plastid. The protein localises to the chloroplast. It carries out the reaction (2R)-2-phosphoglycerate = phosphoenolpyruvate + H2O. Its pathway is carbohydrate degradation; glycolysis; pyruvate from D-glyceraldehyde 3-phosphate: step 4/5. This is Enolase 1, chloroplastic (ENO1) from Arabidopsis thaliana (Mouse-ear cress).